The following is a 450-amino-acid chain: Bifunctional protein GlmU (450 aa).

The interval 1–236 (MTAHKPFSAV…AWEVSGVNNR (236 aa)) is pyrophosphorylase. UDP-N-acetyl-alpha-D-glucosamine-binding positions include 12-15 (LAAG), Lys-26, Gln-79, 84-85 (GT), 107-109 (YGD), Gly-147, Glu-162, Asn-177, and Asn-234. Asp-109 serves as a coordination point for Mg(2+). A Mg(2+)-binding site is contributed by Asn-234. The segment at 237–257 (AELASLESLWQNRKRQDVMKD) is linker. Residues 258 to 450 (GASLIAPETV…KKFRQRKKKK (193 aa)) form an N-acetyltransferase region. 2 residues coordinate UDP-N-acetyl-alpha-D-glucosamine: Arg-323 and Lys-341. Residue His-353 is the Proton acceptor of the active site. UDP-N-acetyl-alpha-D-glucosamine-binding residues include Tyr-356 and Asn-367. Acetyl-CoA contacts are provided by residues 376–377 (NY), Ser-395, Ala-413, and Arg-430.

This sequence in the N-terminal section; belongs to the N-acetylglucosamine-1-phosphate uridyltransferase family. It in the C-terminal section; belongs to the transferase hexapeptide repeat family. As to quaternary structure, homotrimer. Mg(2+) serves as cofactor.

It is found in the cytoplasm. The enzyme catalyses alpha-D-glucosamine 1-phosphate + acetyl-CoA = N-acetyl-alpha-D-glucosamine 1-phosphate + CoA + H(+). It catalyses the reaction N-acetyl-alpha-D-glucosamine 1-phosphate + UTP + H(+) = UDP-N-acetyl-alpha-D-glucosamine + diphosphate. It functions in the pathway nucleotide-sugar biosynthesis; UDP-N-acetyl-alpha-D-glucosamine biosynthesis; N-acetyl-alpha-D-glucosamine 1-phosphate from alpha-D-glucosamine 6-phosphate (route II): step 2/2. The protein operates within nucleotide-sugar biosynthesis; UDP-N-acetyl-alpha-D-glucosamine biosynthesis; UDP-N-acetyl-alpha-D-glucosamine from N-acetyl-alpha-D-glucosamine 1-phosphate: step 1/1. It participates in bacterial outer membrane biogenesis; LPS lipid A biosynthesis. Functionally, catalyzes the last two sequential reactions in the de novo biosynthetic pathway for UDP-N-acetylglucosamine (UDP-GlcNAc). The C-terminal domain catalyzes the transfer of acetyl group from acetyl coenzyme A to glucosamine-1-phosphate (GlcN-1-P) to produce N-acetylglucosamine-1-phosphate (GlcNAc-1-P), which is converted into UDP-GlcNAc by the transfer of uridine 5-monophosphate (from uridine 5-triphosphate), a reaction catalyzed by the N-terminal domain. The sequence is that of Bifunctional protein GlmU from Zymomonas mobilis subsp. mobilis (strain ATCC 31821 / ZM4 / CP4).